Here is a 305-residue protein sequence, read N- to C-terminus: Ribose import binding protein RbsB (305 aa).

Residues 1–18 (MKKAVSVILTLSLFLLTA) form the signal peptide. A lipid anchor (N-palmitoyl cysteine) is attached at cysteine 19. Residue cysteine 19 is the site of S-diacylglycerol cysteine attachment.

This sequence belongs to the bacterial solute-binding protein 2 family. The complex is composed of an ATP-binding protein (RbsA), two transmembrane proteins (RbsC) and a solute-binding protein (RbsB). Interacts with FloT.

It localises to the cell membrane. The protein resides in the membrane raft. In terms of biological role, part of the ABC transporter complex RbsABC involved in ribose import. Binds ribose. The protein is Ribose import binding protein RbsB (rbsB) of Bacillus subtilis (strain 168).